The sequence spans 445 residues: Phosphoglucosamine mutase (445 aa).

The active-site Phosphoserine intermediate is serine 102. Serine 102, aspartate 241, aspartate 243, and aspartate 245 together coordinate Mg(2+). Serine 102 is modified (phosphoserine).

It belongs to the phosphohexose mutase family. Requires Mg(2+) as cofactor. Activated by phosphorylation.

The enzyme catalyses alpha-D-glucosamine 1-phosphate = D-glucosamine 6-phosphate. In terms of biological role, catalyzes the conversion of glucosamine-6-phosphate to glucosamine-1-phosphate. The sequence is that of Phosphoglucosamine mutase from Proteus mirabilis (strain HI4320).